Reading from the N-terminus, the 347-residue chain is Transcription factor JunD (347 aa).

The interval 1–46 (METPFYGDEALSGLGGGGSSSGGGGSFASPGRLFPGAPPTAAPGSM) is disordered. A compositionally biased stretch (gly residues) spans 13 to 26 (GLGGGGSSSGGGGS). The short motif at 29 to 41 (SPGRLFPGAPPTA) is the Menin-binding motif (MBM) element. The MAP kinase docking motif; essential for its phosphorylation signature appears at 48–57 (KKDALTLSLS). The tract at residues 63–91 (ALKPAAAPPPGPLRTDGAPGTAPPDGLLA) is disordered. Serine 92 is subject to Phosphoserine. Serine 102 is subject to Phosphoserine; by MAPK8. Position 119 is a phosphothreonine (threonine 119). Disordered stretches follow at residues 164 to 183 (AAAG…SELA) and 218 to 264 (EPVP…IDMD). Over residues 220-231 (VPFPPPPPPGTL) the composition is skewed to pro residues. 3 positions are modified to phosphoserine: serine 251, serine 255, and serine 259. A basic motif region spans residues 268–295 (RIKAERKRLRNRIAASKCRKRKLERISR). The bZIP domain occupies 268 to 331 (RIKAERKRLR…AQLKQKVLSH (64 aa)). A leucine-zipper region spans residues 296–324 (LEEKVKTLKSQNTELASTASLLREQVAQL).

Belongs to the bZIP family. Jun subfamily. In terms of assembly, heterodimer; binds DNA as a heterodimer. Component of an AP-1 transcription factor complex composed of JUN-FOS heterodimers. As part of the AP-1 transcription factor complex, forms heterodimers with FOS proteins, thereby binding to the AP-1 consensus sequence and stimulating transcription. Forms heterodimers with FOSB; thereby binding to the AP-1 consensus sequence. Interacts (via MBM motif) with MEN1; this interaction represses transcriptional activation. Interacts with MAPK10; this interaction is inhibited in the presence of MEN1. In terms of processing, phosphorylated by MAP kinases MAPK8 and MAPK10; phosphorylation is inhibited in the presence of MEN1.

The protein localises to the nucleus. Transcription factor binding AP-1 sites. Heterodimerizes with proteins of the FOS family to form an AP-1 transcription factor complex, thereby enhancing their DNA binding activity to an AP-1 consensus sequence 3'-TGA[GC]TCA-5' and enhancing their transcriptional activity. This Bos taurus (Bovine) protein is Transcription factor JunD (JUND).